A 239-amino-acid chain; its full sequence is UDP-2,3-diacylglucosamine hydrolase (239 aa).

Mn(2+) contacts are provided by D8, H10, D41, N78, and H113. 78–79 (NR) serves as a coordination point for substrate. Substrate-binding residues include D121, S159, N163, K166, and H194. 2 residues coordinate Mn(2+): H194 and H196.

Belongs to the LpxH family. Mn(2+) is required as a cofactor.

Its subcellular location is the cell inner membrane. It catalyses the reaction UDP-2-N,3-O-bis[(3R)-3-hydroxytetradecanoyl]-alpha-D-glucosamine + H2O = 2-N,3-O-bis[(3R)-3-hydroxytetradecanoyl]-alpha-D-glucosaminyl 1-phosphate + UMP + 2 H(+). Its pathway is glycolipid biosynthesis; lipid IV(A) biosynthesis; lipid IV(A) from (3R)-3-hydroxytetradecanoyl-[acyl-carrier-protein] and UDP-N-acetyl-alpha-D-glucosamine: step 4/6. Its function is as follows. Hydrolyzes the pyrophosphate bond of UDP-2,3-diacylglucosamine to yield 2,3-diacylglucosamine 1-phosphate (lipid X) and UMP by catalyzing the attack of water at the alpha-P atom. Involved in the biosynthesis of lipid A, a phosphorylated glycolipid that anchors the lipopolysaccharide to the outer membrane of the cell. In Shewanella sp. (strain ANA-3), this protein is UDP-2,3-diacylglucosamine hydrolase.